Reading from the N-terminus, the 1993-residue chain is [F-actin]-monooxygenase MICAL3 (1993 aa).

Residues 2–494 form a monooxygenase domain region; sequence EERKQETTNQ…RHLYDSGETK (493 aa). Residues Cys97, 116–118, 123–125, Phe183, Tyr298, and Asp398 contribute to the FAD site; these read EKR and RNN. One can recognise a Calponin-homology (CH) domain in the interval 518–624; the sequence is VARSSKLLGW…YLTQFYEMFK (107 aa). Ser649 carries the phosphoserine modification. The disordered stretch occupies residues 658–704; it reads GQTISRKRSPKDKKEKDSDGAGKRRKTSQSEEEEPPRSYKGERPTLV. Residues 669-679 are compositionally biased toward basic and acidic residues; it reads DKKEKDSDGAG. Phosphoserine is present on residues Ser685 and Ser687. One can recognise an LIM zinc-binding domain in the interval 762–824; that stretch reads DTCYFCQKRV…KPHYCYRLSG (63 aa). Residues Cys764, Cys767, His785, Cys788, Cys791, Cys794, Cys814, and His817 each coordinate Zn(2+). The interval 854–886 is disordered; it reads NGLASVAASSAERSPGTSMNGLEEPSIAKRLRG. The span at 860-873 shows a compositional bias: polar residues; sequence AASSAERSPGTSMN. Phosphothreonine is present on Thr887. Disordered stretches follow at residues 905 to 1023, 1039 to 1309, 1332 to 1546, and 1559 to 1837; these read ELEE…RLQQ, WTHI…LSGP, IRRS…FFTP, and KENG…EELK. Residues 938–951 are compositionally biased toward acidic residues; that stretch reads SEMEEEEEEDDEDD. Over residues 975-988 the composition is skewed to basic and acidic residues; the sequence is GRSEEELEASKNFE. Ser977 is modified (phosphoserine). Positions 989 to 1014 are enriched in acidic residues; it reads PEEEEEEEEYEEEDEEYEEEEEEESS. Basic and acidic residues predominate over residues 1039–1051; that stretch reads WTHIREREAEERM. The span at 1065–1090 shows a compositional bias: acidic residues; that stretch reads DEDDLEEDADSEPAETEGEAAEDGDP. Over residues 1111–1148 the composition is skewed to basic and acidic residues; it reads EAEHRLQSQAKVKAELELRVSENEEEKPSDAPKQEERG. A phosphoserine mark is found at Ser1131 and Ser1187. The segment covering 1199-1212 has biased composition (basic and acidic residues); the sequence is LREKPKAEVPEEQK. Positions 1230 to 1239 are enriched in polar residues; the sequence is SPTSPTSLQP. Residues 1245–1255 are compositionally biased toward pro residues; sequence PPTPPTPPPTQ. The span at 1257–1275 shows a compositional bias: polar residues; sequence PICSQPQPSSDASIPSPTK. Position 1272 is a phosphoserine (Ser1272). Thr1274 is modified (phosphothreonine). Phosphoserine occurs at positions 1276 and 1335. The residue at position 1339 (Thr1339) is a Phosphothreonine. 2 positions are modified to phosphoserine: Ser1369 and Ser1382. The span at 1405–1420 shows a compositional bias: basic and acidic residues; sequence PSDKELRSSQEERRDL. The segment covering 1421 to 1433 has biased composition (low complexity); it reads SSSSGLGLHDSSS. Residue Ser1431 is modified to Phosphoserine. A compositionally biased stretch (polar residues) spans 1434–1452; sequence NMKTLGSQSFNTSDSTMLT. Thr1452 is modified (phosphothreonine). Over residues 1454-1465 the composition is skewed to pro residues; the sequence is PSSPPPPPPPNE. Positions 1516 to 1530 are enriched in acidic residues; it reads SVDEIPFADDVEDTY. Basic and acidic residues predominate over residues 1584–1600; it reads EAKELAEERMRAREKSV. Over residues 1623–1633 the composition is skewed to polar residues; it reads SSRSHTAQSQG. Ser1640 bears the Phosphoserine mark. The segment covering 1665–1685 has biased composition (low complexity); that stretch reads SPPSDSGGPDGSVTSSEGSSG. The span at 1686 to 1704 shows a compositional bias: basic residues; it reads KSKKRSSLFSPRRNKKEKK. A phosphoserine mark is found at Ser1692 and Ser1695. Residues 1754–1763 are compositionally biased toward polar residues; the sequence is TPSSGATVDS. The span at 1795–1811 shows a compositional bias: basic and acidic residues; sequence ILERSSQKSKREPRTYT. The stretch at 1817-1983 forms a coiled coil; sequence AKLTRRVQKA…EEDKDLEAAM (167 aa). A compositionally biased stretch (basic residues) spans 1819-1830; it reads LTRRVQKAARRQ. Positions 1832–1981 constitute a bMERB domain; that stretch reads KQEELKRLHR…EKEEDKDLEA (150 aa). Ser1903 carries the phosphoserine modification.

The protein belongs to the Mical family. In terms of assembly, interacts with RAB1B, RAB8A, RAB10, RAB13 and RAB15 (in their GTP-bound forms); binding to RAB1B is of low affinity compared to other Rab proteins; at least in case of RAB8A can bind 2 molecules of RAB8A simultaneously through a high and a low affinity binding site, respectively. Interacts with ERC1 and RAB8A; may bridge ERC1 with RAB8A. Interacts with KIF23 and ERC1; enhances the interaction between KIF23 and ERC1. Interacts with NINL. It depends on FAD as a cofactor.

Its subcellular location is the cytoplasm. The protein resides in the cell cortex. It localises to the cytoskeleton. It is found in the nucleus. The protein localises to the midbody. Its subcellular location is the spindle. The protein resides in the cilium basal body. It catalyses the reaction L-methionyl-[F-actin] + NADPH + O2 + H(+) = L-methionyl-(R)-S-oxide-[F-actin] + NADP(+) + H2O. Its function is as follows. Monooxygenase that promotes depolymerization of F-actin by mediating oxidation of specific methionine residues on actin to form methionine-sulfoxide, resulting in actin filament disassembly and preventing repolymerization. In the absence of actin, it also functions as a NADPH oxidase producing H(2)O(2). Seems to act as Rab effector protein and play a role in vesicle trafficking. Involved in exocytic vesicles tethering and fusion: the monooxygenase activity is required for this process and implicates RAB8A associated with exocytotic vesicles. Required for cytokinesis. Contributes to stabilization and/or maturation of the intercellular bridge independently of its monooxygenase activity. Promotes recruitment of Rab8 and ERC1 to the intercellular bridge, and together these proteins are proposed to function in timely abscission. The sequence is that of [F-actin]-monooxygenase MICAL3 (Mical3) from Mus musculus (Mouse).